The primary structure comprises 153 residues: MATLEQKLEELVSDTIESMGFELVGIECQRAGRFLTVRLYIDKEGGVTIDDCSDVSRQVSAILDVEDPIADKYNLEVSSPGLDRPLFTLAHYQRFIGQEIVIHLRIPMFDRRKWQGKLESVEGDLITLTVDNETRQFAFGNIQKANLVPVFNF.

Belongs to the RimP family.

It is found in the cytoplasm. In terms of biological role, required for maturation of 30S ribosomal subunits. The chain is Ribosome maturation factor RimP from Actinobacillus pleuropneumoniae serotype 5b (strain L20).